The chain runs to 138 residues: uncharacterized protein (138 aa).

The H-T-H motif DNA-binding region spans 17-38 (LCRNDVAHEAGTNNVQIMRIEK).

This is an uncharacterized protein from Herpetosiphon aurantiacus (Herpetosiphon giganteus).